A 159-amino-acid polypeptide reads, in one-letter code: Protein Smg homolog (159 aa).

Belongs to the Smg family.

In Dichelobacter nodosus (strain VCS1703A), this protein is Protein Smg homolog.